A 186-amino-acid polypeptide reads, in one-letter code: Tegument protein UL55 (186 aa).

The protein belongs to the alphaherpesvirinae HHV-1 UL55 family.

It is found in the virion tegument. It localises to the host nucleus matrix. The polypeptide is Tegument protein UL55 (Homo sapiens (Human)).